A 91-amino-acid polypeptide reads, in one-letter code: Gem-associated protein 7 homolog (91 aa).

The 69-residue stretch at 18–86 (LKFYQKMASA…VVGIEYNLVQ (69 aa)) folds into the Sm domain.

Belongs to the gemin-7 family. In terms of assembly, part of the core SMN complex at least composed of smn1, yip11/gem2, gem6, gem7 and gem8. Interacts with gem6; the interaction is direct. Interacts with gem8; the interaction is direct.

The sequence is that of Gem-associated protein 7 homolog from Schizosaccharomyces pombe (strain 972 / ATCC 24843) (Fission yeast).